The primary structure comprises 688 residues: Nucleolar protein 10 (688 aa).

Position 1 is an N-acetylmethionine (Met1). Ser25 is modified (phosphoserine). WD repeat units lie at residues 44–82, 88–124, 127–163, 170–205, 219–258, 262–300, and 304–341; these read ELIQ…CYDT, KFER…FHSQ, FYYK…RLNL, NPLQ…CWDP, NSVT…LYDL, KPLL…MWNK, and KIFT…IYYI. The stretch at 423–446 forms a coiled coil; sequence EYRKDKIRQKIEETRAQRVQLKKL. Ser475 is subject to Phosphoserine. Phosphothreonine is present on Thr481. The residue at position 514 (Ser514) is a Phosphoserine. Coiled coils occupy residues 514–589 and 640–673; these read SEKR…TVLK and SKQL…LRRS. 2 disordered regions span residues 529 to 557 and 645 to 688; these read LREK…EKAW and FTLK…RSFH. Positions 648–663 are enriched in basic and acidic residues; it reads KRSEQQKKQQEAEKLH. Residues 664 to 688 show a composition bias toward basic residues; it reads RQERKRLRRSAGHLKSRHKRGRSFH.

Belongs to the WD repeat NOL10/ENP2 family.

Its subcellular location is the nucleus. The protein resides in the nucleolus. This chain is Nucleolar protein 10 (NOL10), found in Homo sapiens (Human).